A 429-amino-acid chain; its full sequence is MVRSDENSLGLIGSMSLQGGGVVGKIKTTATTGPTRRALSTINKNITEAPSYPYAVNKRSVSERDGICNKPPVHRPVTRKFAAQLADHKPHIRDEETKKPDSVSSEEPETIIIDVDESDKEGGDSNEPMFVQHTEAMLEEIEQMEKEIEMEDADKEEEPVIDIDACDKNNPLAAVEYIHDMHTFYKNFEKLSCVPPNYMDNQQDLNERMRGILIDWLIEVHYKFELMEETLYLTINVIDRFLAVHQIVRKKLQLVGVTALLLACKYEEVSVPVVDDLILISDKAYSRREVLDMEKLMANTLQFNFSLPTPYVFMKRFLKAAQSDKKLEILSFFMIELCLVEYEMLEYLPSKLAASAIYTAQCTLKGFEEWSKTCEFHTGYNEKQLLACARKMVAFHHKAGTGKLTGVHRKYNTSKFCHAARTEPAGFLI.

Residues 86–101 are compositionally biased toward basic and acidic residues; it reads ADHKPHIRDEETKKPD. Positions 86–109 are disordered; sequence ADHKPHIRDEETKKPDSVSSEEPE.

This sequence belongs to the cyclin family. Cyclin AB subfamily.

The chain is Cyclin-B2-3 (CYCB2-3) from Arabidopsis thaliana (Mouse-ear cress).